We begin with the raw amino-acid sequence, 491 residues long: Spermatogenesis-defective protein 39 homolog (491 aa).

Residue threonine 21 is modified to Phosphothreonine. Residues 72 to 81 (KETAGSSGST) show a composition bias toward polar residues. A disordered region spans residues 72-101 (KETAGSSGSTPEGREQLKGRNSFYTQLPKP). Threonine 115 carries the post-translational modification Phosphothreonine. Serine 119, serine 122, and serine 128 each carry phosphoserine. Residues 121–141 (QSLSDALSDTPAKSYAPELGR) are disordered. Threonine 130 bears the Phosphothreonine mark.

Belongs to the SPE39 family. As to quaternary structure, interacts with VPS33B. Associates with the homotypic fusion and vacuole protein sorting (HOPS) complex; impaired by VPS33B. Interacts with RAB11A.

It localises to the cytoplasm. It is found in the cytoplasmic vesicle. Its subcellular location is the early endosome. The protein localises to the recycling endosome. The protein resides in the late endosome. Proposed to be involved in endosomal maturation implicating in part VPS33B. In epithelial cells, the VPS33B:VIPAS39 complex may play a role in the apical RAB11A-dependent recycling pathway and in the maintenance of the apical-basolateral polarity. May play a role in lysosomal trafficking, probably via association with the core HOPS complex in a discrete population of endosomes; the functions seems to be independent of VPS33B. May play a role in vesicular trafficking during spermatogenesis. May be involved in direct or indirect transcriptional regulation of E-cadherin. This chain is Spermatogenesis-defective protein 39 homolog (Vipas39), found in Mus musculus (Mouse).